A 241-amino-acid chain; its full sequence is 2,3-bisphosphoglycerate-dependent phosphoglycerate mutase (241 aa).

His-12 (tele-phosphohistidine intermediate) is an active-site residue. Substrate contacts are provided by residues 24-25, Arg-61, 117-120, and Lys-128; these read SG and ERYY. Glu-117 serves as the catalytic Proton donor/acceptor.

Belongs to the phosphoglycerate mutase family. BPG-dependent PGAM subfamily.

It carries out the reaction (2R)-2-phosphoglycerate = (2R)-3-phosphoglycerate. The protein operates within carbohydrate degradation; glycolysis; pyruvate from D-glyceraldehyde 3-phosphate: step 3/5. Its function is as follows. Catalyzes the interconversion of 2-phosphoglycerate and 3-phosphoglycerate. The protein is 2,3-bisphosphoglycerate-dependent phosphoglycerate mutase of Methanosarcina mazei (strain ATCC BAA-159 / DSM 3647 / Goe1 / Go1 / JCM 11833 / OCM 88) (Methanosarcina frisia).